Consider the following 737-residue polypeptide: Polyribonucleotide nucleotidyltransferase (737 aa).

Asp489 and Asp495 together coordinate Mg(2+). In terms of domain architecture, KH spans 556-615 (PKIDTIKIDVDKIKIVIGKGGETIDKIIAETGVKIDIDEEGNVSIYSSDQDAINRAKEII). The region spanning 625–693 (DEVYRAKVVR…EKGRIDASMK (69 aa)) is the S1 motif domain. The disordered stretch occupies residues 691–737 (SMKALLPRPPKPEHDEKGEKSERPHRPRHHKDHKPKKEFTETPKDSE). Residues 700–714 (PKPEHDEKGEKSERP) show a composition bias toward basic and acidic residues. Basic residues predominate over residues 715–724 (HRPRHHKDHK). Over residues 725 to 737 (PKKEFTETPKDSE) the composition is skewed to basic and acidic residues.

It belongs to the polyribonucleotide nucleotidyltransferase family. Requires Mg(2+) as cofactor.

Its subcellular location is the cytoplasm. It catalyses the reaction RNA(n+1) + phosphate = RNA(n) + a ribonucleoside 5'-diphosphate. Functionally, involved in mRNA degradation. Catalyzes the phosphorolysis of single-stranded polyribonucleotides processively in the 3'- to 5'-direction. In Streptococcus pneumoniae (strain 70585), this protein is Polyribonucleotide nucleotidyltransferase.